The chain runs to 378 residues: Queuine tRNA-ribosyltransferase (378 aa).

The active-site Proton acceptor is the Asp-90. Substrate is bound by residues 90 to 94 (DSGGY), Asp-152, Gln-194, and Gly-223. The tract at residues 254-260 (GVGKPED) is RNA binding. The active-site Nucleophile is the Asp-273. An RNA binding; important for wobble base 34 recognition region spans residues 278 to 282 (TRNAR). Positions 311, 313, 316, and 342 each coordinate Zn(2+).

The protein belongs to the queuine tRNA-ribosyltransferase family. Homodimer. Within each dimer, one monomer is responsible for RNA recognition and catalysis, while the other monomer binds to the replacement base PreQ1. The cofactor is Zn(2+).

It carries out the reaction 7-aminomethyl-7-carbaguanine + guanosine(34) in tRNA = 7-aminomethyl-7-carbaguanosine(34) in tRNA + guanine. The protein operates within tRNA modification; tRNA-queuosine biosynthesis. Catalyzes the base-exchange of a guanine (G) residue with the queuine precursor 7-aminomethyl-7-deazaguanine (PreQ1) at position 34 (anticodon wobble position) in tRNAs with GU(N) anticodons (tRNA-Asp, -Asn, -His and -Tyr). Catalysis occurs through a double-displacement mechanism. The nucleophile active site attacks the C1' of nucleotide 34 to detach the guanine base from the RNA, forming a covalent enzyme-RNA intermediate. The proton acceptor active site deprotonates the incoming PreQ1, allowing a nucleophilic attack on the C1' of the ribose to form the product. After dissociation, two additional enzymatic reactions on the tRNA convert PreQ1 to queuine (Q), resulting in the hypermodified nucleoside queuosine (7-(((4,5-cis-dihydroxy-2-cyclopenten-1-yl)amino)methyl)-7-deazaguanosine). The sequence is that of Queuine tRNA-ribosyltransferase from Aquifex aeolicus (strain VF5).